The primary structure comprises 176 residues: MTIGVDLSTDLQDWIRLSGMNMIQGSETNDGRTILWNKGGEVRYFIDRLAGWYVITSSDRMSREGYEFAAASMSVIEKYLYGYFGGSVRSERELPAIRAPFQPEELMPEYSIGTMTFAGRQRDTLIDSSGTVVAITAADRLVELSHYLDVSVNVIKDSFLDSEGKPLFTLWKDYKG.

In terms of assembly, interacts with the tuberculosis necrotizing toxin (TNT) homolog, the C-terminal domain of the outer membrane channel protein CpnT.

Antitoxin for tuberculosis necrotizing toxin (TNT) homolog. Acts by binding directly to TNT, which inhibits NAD(+) glycohydrolase activity of TNT and protects M.bovis from self-poisoning. This chain is Immunity factor for TNT homolog, found in Mycobacterium bovis (strain BCG / Pasteur 1173P2).